The sequence spans 782 residues: Sulfate permease family protein 3 (782 aa).

Transmembrane regions (helical) follow at residues 30-52 (YACSPSKCIHSLLSFLPIITWLP), 64-84 (LSGGLTMAVFSVPQGIALASI), 86-106 (GVPPVYGLYTAIFPSFLYIFF), 113-133 (ALGGFAVLSLMTHGAIEKVML), 196-216 (IHVATTIIFLAGVIQVFMGVF), 232-252 (GFVVGGGIHVFFAQIGNMLGI), 274-294 (LDNVHIPTVCISLSSFLFLVF), 302-322 (WLNSAFNYPVPFELVLVVVGI), 359-379 (HIGLNAAAIAITAVAIHITVA), 398-418 (ALGFVGVLSSFFPVFPVTSGF), 433-453 (LTCLFSSLALLSVILCIGPAL), and 497-517 (FFLTVCYDMGEGLLMAIGFAV). One can recognise an STAS domain in the interval 546–700 (KRDLERIQGN…NKVGDAVKAA (155 aa)). Positions 728–742 (IDEESSDSNDNDDAE) are enriched in acidic residues. The tract at residues 728 to 782 (IDEESSDSNDNDDAEIQERITEESENSEEVMSETSVSIEDATSLTSSRNSINSEE) is disordered. Residues 767 to 782 (DATSLTSSRNSINSEE) show a composition bias toward polar residues.

It belongs to the SLC26A/SulP transporter (TC 2.A.53) family.

The protein resides in the membrane. Possible sulfate transporter. The sequence is that of Sulfate permease family protein 3 (sulp-3) from Caenorhabditis elegans.